A 546-amino-acid chain; its full sequence is Chaperonin GroEL (546 aa).

Residues 30–33, Lys-51, 87–91, Gly-415, 479–481, and Asp-495 contribute to the ATP site; these read TLGP, DGTTT, and NAA. The tract at residues 526 to 546 is disordered; the sequence is KEDAPMPGGMPGGMGGMGMDM. Residues 534-546 are compositionally biased toward gly residues; that stretch reads GMPGGMGGMGMDM.

It belongs to the chaperonin (HSP60) family. As to quaternary structure, forms a cylinder of 14 subunits composed of two heptameric rings stacked back-to-back. Interacts with the co-chaperonin GroES.

The protein resides in the cytoplasm. It carries out the reaction ATP + H2O + a folded polypeptide = ADP + phosphate + an unfolded polypeptide.. Together with its co-chaperonin GroES, plays an essential role in assisting protein folding. The GroEL-GroES system forms a nano-cage that allows encapsulation of the non-native substrate proteins and provides a physical environment optimized to promote and accelerate protein folding. This Burkholderia thailandensis protein is Chaperonin GroEL.